Consider the following 1037-residue polypeptide: Receptor kinase-like protein Xa21 (1037 aa).

The N-terminal stretch at 1-24 is a signal peptide; it reads MARSPTSVMISSLLLLLLIGPASS. Residues 25–665 are Extracellular-facing; sequence DDAAAAAAAR…LLENRKHFPV (641 aa). Asn-66, Asn-101, and Asn-112 each carry an N-linked (GlcNAc...) asparagine glycan. LRR repeat units follow at residues 89–112, 113–137, 138–161, 163–185, 187–210, 211–234, 236–259, 260–283, 285–308, 310–331, and 333–355; these read PHRVVKLLLRSSNLSGIISPSLGN, LSFLRELDLSDNYLSGEIPPELSRL, SRLQLLELSGNSIQGSIPAAIGAC, KLTSLDLSHNQLRGMIPREIGAS, KHLSNLYLHTNGLSGEIPSALGNL, TSLQYFDLSCNRLSGAIPSSLGQL, SSLLTMNLRQNNLSGMIPNSIWNL, SSLRAFSVSENKLGGMIPTNAFKT, HLLEVIDMGTNRFYGKIPASVANA, HLTQLQIDGNLFSGIITSGFGR, and RNLTTLYLWRNLFQTREQEDWGF. Asn-209 is a glycosylation site (N-linked (GlcNAc...) asparagine). N-linked (GlcNAc...) asparagine glycosylation is found at Asn-247 and Asn-258. Asn-307 is a glycosylation site (N-linked (GlcNAc...) asparagine). 3 N-linked (GlcNAc...) asparagine glycosylation sites follow: Asn-334, Asn-361, and Asn-385. LRR repeat units follow at residues 362–385, 387–411, 412–435, 437–459, 460–482, 483–507, 509–532, 533–556, 557–580, 581–604, and 606–629; these read CSKLQTLDLGENNLGGVLPNSFSN, STSLSFLALDLNKITGSIPKDIGNL, IGLQHLYLCNNNFRGSLPSSLGRL, NLGILVAYENNLSGSIPLAIGNL, TELNILLLGTNKFSGWIPYTLSN, LTNLLSLGLSTNNLSGPIPSELFNI, TLSIMINVSKNNLEGSIPQEIGHL, KNLVEFHAESNRLSGKIPNTLGDC, QLLRYLYLQNNLLSGSIPSALGQL, KGLETLDLSSNNLSGQIPTSLADI, and MLHSLNLSFNSFMGEVPTIGAFAD. N-linked (GlcNAc...) asparagine glycans are attached at residues Asn-447, Asn-458, Asn-482, Asn-495, and Asn-515. Asn-592 and Asn-611 each carry an N-linked (GlcNAc...) asparagine glycan. Residues 666-686 form a helical membrane-spanning segment; sequence LPISVSLVAALAILSSLYLLI. The Cytoplasmic portion of the chain corresponds to 687–1037; the sequence is TWHKRTKKGA…PVCEGASLEF (351 aa). Residues 689–694 carry the Nuclear localization signal motif; the sequence is HKRTKK. Phosphoserine is present on Ser-698. At Thr-700 the chain carries Phosphothreonine. Phosphoserine is present on Ser-701. The residue at position 717 (Thr-717) is a Phosphothreonine. In terms of domain architecture, Protein kinase spans 720-1019; that stretch reads FAPTNLLGSG…GDIIDELNAI (300 aa). ATP is bound by residues 726–734 and Lys-748; that span reads LGSGSFGSV. Residue Asp-854 is the Proton acceptor of the active site.

It belongs to the protein kinase superfamily. Ser/Thr protein kinase family. Interacts with WRKY62/XB10 in the nucleus. Interacts with SERK2. Mn(2+) serves as cofactor. Requires Mg(2+) as cofactor. Post-translationally, undergoes protein cleavage upon X.oryzae pv. oryzae protein Ax21 detection, thus releasing the processed protein kinase Xa21 chain. In terms of processing, autophosphorylated on serine and threonine residues; these phosphorylation prevents proteolytic degradation.

The protein localises to the cell membrane. It localises to the endoplasmic reticulum membrane. Its subcellular location is the nucleus. The catalysed reaction is L-seryl-[protein] + ATP = O-phospho-L-seryl-[protein] + ADP + H(+). It catalyses the reaction L-threonyl-[protein] + ATP = O-phospho-L-threonyl-[protein] + ADP + H(+). Its function is as follows. Receptor kinase that detects X.oryzae pv. oryzae protein Ax21 to promote innate immunity. Following X.oryzae pv. oryzae protein Ax21 detection, undergoes cleavage, releasing the processed protein kinase Xa21 chain. Functionally, the processed protein kinase Xa21 chain released by protein cleavage after X.oryzae pv. oryzae protein Ax21 detection translocates into the nucleus where it can bind and regulate WRKY62, a transcription factor. Confers resistance to the bacterial pathogen X.oryzae pv. oryzae (Xoo). The chain is Receptor kinase-like protein Xa21 from Oryza sativa subsp. japonica (Rice).